A 244-amino-acid polypeptide reads, in one-letter code: Leucyl/phenylalanyl-tRNA--protein transferase (244 aa).

This sequence belongs to the L/F-transferase family.

It is found in the cytoplasm. It carries out the reaction N-terminal L-lysyl-[protein] + L-leucyl-tRNA(Leu) = N-terminal L-leucyl-L-lysyl-[protein] + tRNA(Leu) + H(+). The catalysed reaction is N-terminal L-arginyl-[protein] + L-leucyl-tRNA(Leu) = N-terminal L-leucyl-L-arginyl-[protein] + tRNA(Leu) + H(+). It catalyses the reaction L-phenylalanyl-tRNA(Phe) + an N-terminal L-alpha-aminoacyl-[protein] = an N-terminal L-phenylalanyl-L-alpha-aminoacyl-[protein] + tRNA(Phe). Functionally, functions in the N-end rule pathway of protein degradation where it conjugates Leu, Phe and, less efficiently, Met from aminoacyl-tRNAs to the N-termini of proteins containing an N-terminal arginine or lysine. The polypeptide is Leucyl/phenylalanyl-tRNA--protein transferase (Janthinobacterium sp. (strain Marseille) (Minibacterium massiliensis)).